The chain runs to 345 residues: MIILGFESSCDETGVAAVCTQRGLLAHALHSQIAMHQEYGGVVPELASRDHIRRIVPLTREVLAQAGLRREDVGAVAYTAGPGLAGALLVGASVAQSLAWSLGLPAIAIHHLEGHLLSPLLADPRPEFPFVALLVSGGHTQLMRVDGVGRYVLLGETLDDAAGEAFDKSAKLMGLGYPGGPALSRLAEQGDASRFDLPRPMLHSGDLDFSFSGLKTAVLTRVKAATREGALDEQARADLAAATQAAIIEVLAAKSICALKQTGLKRLVVAGGVGANSLLRQRLAEVLPRMKATAYFPPLSLCTDNGAMIAFAAAERVKAGLANLEQGDHAFTVRPRWDLAELERG.

Residues His-111 and His-115 each coordinate Fe cation. Substrate-binding positions include 134-138, Asp-167, Gly-180, and Asn-276; that span reads LVSGG. Asp-304 provides a ligand contact to Fe cation.

It belongs to the KAE1 / TsaD family. The cofactor is Fe(2+).

The protein resides in the cytoplasm. It catalyses the reaction L-threonylcarbamoyladenylate + adenosine(37) in tRNA = N(6)-L-threonylcarbamoyladenosine(37) in tRNA + AMP + H(+). Required for the formation of a threonylcarbamoyl group on adenosine at position 37 (t(6)A37) in tRNAs that read codons beginning with adenine. Is involved in the transfer of the threonylcarbamoyl moiety of threonylcarbamoyl-AMP (TC-AMP) to the N6 group of A37, together with TsaE and TsaB. TsaD likely plays a direct catalytic role in this reaction. This is tRNA N6-adenosine threonylcarbamoyltransferase from Bordetella avium (strain 197N).